The following is a 430-amino-acid chain: Putative glycylpeptide N-tetradecanoyltransferase 2 (430 aa).

Tetradecanoyl-CoA-binding positions include 47-50, 181-183, and 189-193; these read HKFW, LCV, and SKGLA. The Proton acceptor; via carboxylate role is filled by Leu430.

This sequence belongs to the NMT family.

The enzyme catalyses N-terminal glycyl-[protein] + tetradecanoyl-CoA = N-tetradecanoylglycyl-[protein] + CoA + H(+). Functionally, may add a myristoyl group to the N-terminal glycine residue of certain cellular proteins. This Arabidopsis thaliana (Mouse-ear cress) protein is Putative glycylpeptide N-tetradecanoyltransferase 2 (NMT2).